An 830-amino-acid polypeptide reads, in one-letter code: Serine/threonine-protein kinase atg1 (830 aa).

The Protein kinase domain maps to 14–307; sequence YVIRSEIGRG…YDGFFSSIVV (294 aa). Residues 20-28 and Lys-43 contribute to the ATP site; that span reads IGRGSFAIV. Asp-157 serves as the catalytic Proton acceptor. Residue Ser-346 is modified to Phosphoserine. The segment covering 448-468 has biased composition (polar residues); sequence TQLSNESLTHEQSINGNSPSP. The tract at residues 448–480 is disordered; the sequence is TQLSNESLTHEQSINGNSPSPNEGVFQGSFSPE.

It belongs to the protein kinase superfamily. Ser/Thr protein kinase family. APG1/unc-51/ULK1 subfamily. Homodimer. Component of the atg1 kinase complex composed of at least atg1, atg13, atg17 and atg101. Interacts directly with atg13. Post-translationally, phosphorylated. Dephosphorylated under depletion of nitrogen.

It carries out the reaction L-seryl-[protein] + ATP = O-phospho-L-seryl-[protein] + ADP + H(+). It catalyses the reaction L-threonyl-[protein] + ATP = O-phospho-L-threonyl-[protein] + ADP + H(+). Serine/threonine protein kinase involved in the cytoplasm to vacuole transport (Cvt) and found to be essential in autophagy, where it is required for the formation of autophagosomes. Involved in the clearance of protein aggregates which cannot be efficiently cleared by the proteasome. Required for selective autophagic degradation of the nucleus (nucleophagy) as well as for mitophagy which contributes to regulate mitochondrial quantity and quality by eliminating the mitochondria to a basal level to fulfill cellular energy requirements and preventing excess ROS production. Also involved in endoplasmic reticulum-specific autophagic process, in selective removal of ER-associated degradation (ERAD) substrates. Plays a key role in ATG9 and ATG23 cycling through the pre-autophagosomal structure and is necessary to promote ATG18 binding to ATG9 through phosphorylation of ATG9. Catalyzes phosphorylation of ATG4, decreasing the interaction between ATG4 and ATG8 and impairing deconjugation of PE-conjugated forms of ATG8. Autophagy functions to supply nitrogen and is activated when cells cannot access exogenous nitrogen, thus ensuring that they can adapt and subsequently propagate. Finally, atg13 is also required for glycogen storage during stationary phase and has a role in meiosis and sporulation. The protein is Serine/threonine-protein kinase atg1 of Schizosaccharomyces pombe (strain 972 / ATCC 24843) (Fission yeast).